A 154-amino-acid polypeptide reads, in one-letter code: 3-hydroxyacyl-[acyl-carrier-protein] dehydratase FabZ (154 aa).

Residue His-55 is part of the active site.

Belongs to the thioester dehydratase family. FabZ subfamily.

It localises to the cytoplasm. The enzyme catalyses a (3R)-hydroxyacyl-[ACP] = a (2E)-enoyl-[ACP] + H2O. Involved in unsaturated fatty acids biosynthesis. Catalyzes the dehydration of short chain beta-hydroxyacyl-ACPs and long chain saturated and unsaturated beta-hydroxyacyl-ACPs. In Nitratidesulfovibrio vulgaris (strain DSM 19637 / Miyazaki F) (Desulfovibrio vulgaris), this protein is 3-hydroxyacyl-[acyl-carrier-protein] dehydratase FabZ.